The sequence spans 397 residues: Chorismate synthase (397 aa).

2 residues coordinate NADP(+): arginine 40 and arginine 46. Residues 129–131 (RSS), 257–258 (QA), glycine 302, 317–321 (KPISS), and arginine 343 each bind FMN.

This sequence belongs to the chorismate synthase family. In terms of assembly, homotetramer. Requires FMNH2 as cofactor.

It carries out the reaction 5-O-(1-carboxyvinyl)-3-phosphoshikimate = chorismate + phosphate. It participates in metabolic intermediate biosynthesis; chorismate biosynthesis; chorismate from D-erythrose 4-phosphate and phosphoenolpyruvate: step 7/7. In terms of biological role, catalyzes the anti-1,4-elimination of the C-3 phosphate and the C-6 proR hydrogen from 5-enolpyruvylshikimate-3-phosphate (EPSP) to yield chorismate, which is the branch point compound that serves as the starting substrate for the three terminal pathways of aromatic amino acid biosynthesis. This reaction introduces a second double bond into the aromatic ring system. The sequence is that of Chorismate synthase from Chlorobium phaeobacteroides (strain DSM 266 / SMG 266 / 2430).